Here is a 190-residue protein sequence, read N- to C-terminus: Small ribosomal subunit protein uS4 (190 aa).

Residues 105–181 (RRLQTLVYKL…RKKAKAAEGG (77 aa)) enclose the S4 RNA-binding domain. The disordered stretch occupies residues 163 to 190 (GGGRPGRVRRKKAKAAEGGDGDAEEDEE). A compositionally biased stretch (acidic residues) spans 181–190 (GDGDAEEDEE).

Belongs to the universal ribosomal protein uS4 family.

In Podospora anserina (Pleurage anserina), this protein is Small ribosomal subunit protein uS4 (RPS9).